Reading from the N-terminus, the 38-residue chain is 4 kDa defensin (38 aa).

Disulfide bonds link Cys-4/Cys-25, Cys-11/Cys-33, and Cys-15/Cys-35.

Belongs to the invertebrate defensin family. Type 2 subfamily.

It is found in the secreted. Dual-function peptide with antimicrobial and potassium channel-blocking activities. Shows inhibitory activity against Gram-positive bacteria such as M.luteus, S.aureus, B.subtilis, and M.luteus as well as methicillin-resistant S.aureus (MIC=0.1-20 uM). Does not act on bacteria by disrupting membranes. Also moderately inhibits Kv1.1/KCNA1, Kv1.2/KCNA2, and Kv1.3/KCNA3 potassium channels. Inhibits potassium channels by interacting with the pore region. Does not show hemolytic activity. This chain is 4 kDa defensin, found in Leiurus hebraeus (Hebrew deathstalker scorpion).